A 244-amino-acid chain; its full sequence is NAD-dependent protein deacetylase (244 aa).

The 244-residue stretch at 1-244 (MTGEQLAHWI…LSAVQRAVMP (244 aa)) folds into the Deacetylase sirtuin-type domain. Residues Ala-22, Thr-26, Phe-33, Arg-34, Gln-103, Ile-105, Asp-106, and His-121 each coordinate NAD(+). Phe-33 serves as a coordination point for nicotinamide. Nicotinamide is bound by residues Ile-105 and Asp-106. Residue His-121 is the Proton acceptor of the active site. Zn(2+) is bound by residues Cys-129, Cys-132, Cys-150, and Cys-152. 4 residues coordinate NAD(+): Thr-190, Ser-191, Asn-213, and Leu-231.

The protein belongs to the sirtuin family. Class U subfamily. Zn(2+) is required as a cofactor.

The protein resides in the cytoplasm. It catalyses the reaction N(6)-acetyl-L-lysyl-[protein] + NAD(+) + H2O = 2''-O-acetyl-ADP-D-ribose + nicotinamide + L-lysyl-[protein]. Functionally, NAD-dependent protein deacetylase which modulates the activities of several enzymes which are inactive in their acetylated form. The chain is NAD-dependent protein deacetylase from Cutibacterium acnes (strain DSM 16379 / KPA171202) (Propionibacterium acnes).